Here is a 322-residue protein sequence, read N- to C-terminus: Ferredoxin--NADP reductase (322 aa).

Residues Asp-34, Gln-42, Tyr-47, Val-87, Phe-120, Asp-279, and Thr-320 each contribute to the FAD site.

It belongs to the ferredoxin--NADP reductase type 2 family. Homodimer. The cofactor is FAD.

The catalysed reaction is 2 reduced [2Fe-2S]-[ferredoxin] + NADP(+) + H(+) = 2 oxidized [2Fe-2S]-[ferredoxin] + NADPH. The protein is Ferredoxin--NADP reductase of Streptococcus pneumoniae (strain Hungary19A-6).